Reading from the N-terminus, the 295-residue chain is Hydroxyquinol 1,2-dioxygenase (295 aa).

Tyr165, Tyr200, His224, and His226 together coordinate Fe cation.

Belongs to the intradiol ring-cleavage dioxygenase family. Fe(3+) is required as a cofactor.

The enzyme catalyses benzene-1,2,4-triol + O2 = maleylacetate + 2 H(+). It functions in the pathway aromatic compound metabolism. Its function is as follows. Involved in the gamma-resorcylate (2,6-dihydroxybenzoate) catabolism. Catalyzes the conversion of hydroxyquinol to malelylacetate. This is Hydroxyquinol 1,2-dioxygenase from Rhizobium sp. (strain MTP-10005).